The following is a 462-amino-acid chain: Sonic hedgehog protein (462 aa).

A signal peptide spans Met1–Ala23. The N-palmitoyl cysteine moiety is linked to residue Cys24. Residues Lys32–Lys38 carry the Cardin-Weintraub motif. 7 residues coordinate Ca(2+): Glu89, Glu90, Asp95, Thr125, Glu126, Asp129, and Asp131. Residues His140, Asp147, and His182 each contribute to the Zn(2+) site. Residue Gly197 is the site of Cholesterol glycine ester attachment. The N-linked (GlcNAc...) asparagine glycan is linked to Asn278. 2 disordered regions span residues Asp279 to Arg302 and Thr395 to Ala414. Low complexity predominate over residues Gly283–Gly292. The segment covering Asp400–Arg412 has biased composition (gly residues).

It belongs to the hedgehog family. In terms of assembly, multimer. As to quaternary structure, interacts with HHATL/GUP1 which negatively regulates HHAT-mediated palmitoylation of the SHH N-terminus. Interacts with BOC and CDON. Interacts with HHIP. Interacts with DISP1 via its cholesterol anchor. Interacts with SCUBE2. Interacts with glypican GPC3. In terms of processing, the C-terminal domain displays an autoproteolysis activity and a cholesterol transferase activity. Both activities result in the cleavage of the full-length protein and covalent attachment of a cholesterol moiety to the C-terminal of the newly generated N-terminal fragment (ShhN). Cholesterylation is required for the sonic hedgehog protein N-product targeting to lipid rafts and multimerization. ShhN is the active species in both local and long-range signaling, whereas the C-product (ShhC) is degraded in the endoplasmic reticulum. N-palmitoylation by HHAT of ShhN is required for sonic hedgehog protein N-product multimerization and full activity. It is a prerequisite for the membrane-proximal positioning and the subsequent shedding of this N-terminal peptide. Post-translationally, the lipidated N- and C-terminal peptides of ShhNp can be cleaved (shedding). The N-terminal palmitoylated peptide is cleaved at the Cardin-Weintraub (CW) motif site. The cleavage reduced the interactions with heparan sulfate. The cleavage is enhanced by SCUBE2.

The protein resides in the endoplasmic reticulum membrane. Its subcellular location is the golgi apparatus membrane. It is found in the secreted. It localises to the cell membrane. It catalyses the reaction glycyl-L-cysteinyl-[protein] + cholesterol + H(+) = [protein]-C-terminal glycyl cholesterol ester + N-terminal L-cysteinyl-[protein]. The C-terminal part of the sonic hedgehog protein precursor displays an autoproteolysis and a cholesterol transferase activity. Both activities result in the cleavage of the full-length protein into two parts (ShhN and ShhC) followed by the covalent attachment of a cholesterol moiety to the C-terminal of the newly generated ShhN. Both activities occur in the endoplasmic reticulum. Once cleaved, ShhC is degraded in the endoplasmic reticulum. Its function is as follows. The dually lipidated sonic hedgehog protein N-product (ShhNp) is a morphogen which is essential for a variety of patterning events during development. Induces ventral cell fate in the neural tube and somites. Involved in the patterning of the anterior-posterior axis of the developing limb bud. Essential for axon guidance. Binds to the patched (PTCH1) receptor, which functions in association with smoothened (SMO), to activate the transcription of target genes. In the absence of SHH, PTCH1 represses the constitutive signaling activity of SMO. The protein is Sonic hedgehog protein of Homo sapiens (Human).